The chain runs to 607 residues: CRS2-associated factor 2, chloroplastic (607 aa).

Residues 1–75 are disordered; it reads MSPPPPQRPS…GNGGNPAFRA (75 aa). Residues 1–79 constitute a chloroplast transit peptide; the sequence is MSPPPPQRPS…NPAFRAPHLR (79 aa). CRM domains are found at residues 228–324 and 346–442; these read EPLT…TRPR and EGLT…YPKP. The tract at residues 482–505 is CRS2 binding; it reads KMFELWTNAIESSVALMLDDAEVD. Residues 550–576 form a disordered region; sequence TEDEPETGTLEPQQHEFTESSDVAEDD.

In terms of assembly, interacts with CRS2 and RNA. Part of large ribonucleo-protein complexes that include group IIB introns, CRS2 and CAF2.

The protein resides in the plastid. Its subcellular location is the chloroplast stroma. In terms of biological role, required for the splicing of group IIB introns in chloroplasts. Forms splicing particles with CRS2. Interacts with RNA and confers intron specificity of the splicing particles. This is CRS2-associated factor 2, chloroplastic from Oryza sativa subsp. japonica (Rice).